Consider the following 38-residue polypeptide: Photosystem II reaction center protein L (38 aa).

The helical transmembrane segment at 17–37 (SLYWGLLLIFVLAVLFSSYIF) threads the bilayer.

The protein belongs to the PsbL family. As to quaternary structure, PSII is composed of 1 copy each of membrane proteins PsbA, PsbB, PsbC, PsbD, PsbE, PsbF, PsbH, PsbI, PsbJ, PsbK, PsbL, PsbM, PsbT, PsbY, PsbZ, Psb30/Ycf12, at least 3 peripheral proteins of the oxygen-evolving complex and a large number of cofactors. It forms dimeric complexes.

It is found in the plastid. Its subcellular location is the chloroplast thylakoid membrane. One of the components of the core complex of photosystem II (PSII). PSII is a light-driven water:plastoquinone oxidoreductase that uses light energy to abstract electrons from H(2)O, generating O(2) and a proton gradient subsequently used for ATP formation. It consists of a core antenna complex that captures photons, and an electron transfer chain that converts photonic excitation into a charge separation. This subunit is found at the monomer-monomer interface and is required for correct PSII assembly and/or dimerization. The sequence is that of Photosystem II reaction center protein L from Euglena gracilis.